A 137-amino-acid polypeptide reads, in one-letter code: Ribosome-binding factor A (137 aa).

The protein belongs to the RbfA family. Monomer. Binds 30S ribosomal subunits, but not 50S ribosomal subunits or 70S ribosomes.

Its subcellular location is the cytoplasm. In terms of biological role, one of several proteins that assist in the late maturation steps of the functional core of the 30S ribosomal subunit. Associates with free 30S ribosomal subunits (but not with 30S subunits that are part of 70S ribosomes or polysomes). Required for efficient processing of 16S rRNA. May interact with the 5'-terminal helix region of 16S rRNA. The protein is Ribosome-binding factor A of Erwinia tasmaniensis (strain DSM 17950 / CFBP 7177 / CIP 109463 / NCPPB 4357 / Et1/99).